Here is a 451-residue protein sequence, read N- to C-terminus: Phosphoglucosamine mutase (451 aa).

The active-site Phosphoserine intermediate is serine 101. Positions 101, 241, 243, and 245 each coordinate Mg(2+). Residue serine 101 is modified to Phosphoserine.

This sequence belongs to the phosphohexose mutase family. The cofactor is Mg(2+). Activated by phosphorylation.

The catalysed reaction is alpha-D-glucosamine 1-phosphate = D-glucosamine 6-phosphate. Catalyzes the conversion of glucosamine-6-phosphate to glucosamine-1-phosphate. The chain is Phosphoglucosamine mutase from Exiguobacterium sibiricum (strain DSM 17290 / CCUG 55495 / CIP 109462 / JCM 13490 / 255-15).